A 508-amino-acid polypeptide reads, in one-letter code: Probable cytosol aminopeptidase (508 aa).

Residues Lys274 and Asp279 each coordinate Mn(2+). The active site involves Lys286. Positions 297, 356, and 358 each coordinate Mn(2+). Arg360 is an active-site residue.

Belongs to the peptidase M17 family. The cofactor is Mn(2+).

The protein resides in the cytoplasm. The enzyme catalyses Release of an N-terminal amino acid, Xaa-|-Yaa-, in which Xaa is preferably Leu, but may be other amino acids including Pro although not Arg or Lys, and Yaa may be Pro. Amino acid amides and methyl esters are also readily hydrolyzed, but rates on arylamides are exceedingly low.. It catalyses the reaction Release of an N-terminal amino acid, preferentially leucine, but not glutamic or aspartic acids.. Presumably involved in the processing and regular turnover of intracellular proteins. Catalyzes the removal of unsubstituted N-terminal amino acids from various peptides. The sequence is that of Probable cytosol aminopeptidase from Cutibacterium acnes (strain DSM 16379 / KPA171202) (Propionibacterium acnes).